A 406-amino-acid chain; its full sequence is MKKVHERFLEYVKVDTKSDETTRVTPSTKGQLELGKMLAEELKEIGVDEVRISEEGYVYACLKSNCNKDIPKIGFISHMDTAPDMSGKNVNPKIVENYDGKDIELGNGYTLSPSFSPELPMYKGQTLITTDGTTLLGADDKAGIAEIVTAIEYLINHPEIKHGDIKIGFTPDEEIGEGADHFDVEGFGADFAYTLDGGRIGELEYENFNAASAKVEIIGKNVHPGSAKGKMINSILVAHEFVSMLPLDEVPEKTEGYEGFSFLLDIQGEVEKTSLSFIIRDFDKEGFKNRKERFNEIAKELNKKYGEGTVTVTLKDQYMNMKEMIEPRMHIVETAEKAMKQCGIEPIKNPIRGGTDGARLSFMGLPTPNLFTGGENFHGRYEYISINSMEKAVEVILNIIKIYAEK.

H78 provides a ligand contact to Zn(2+). Residue D80 is part of the active site. D139 is a binding site for Zn(2+). E173 acts as the Proton acceptor in catalysis. The Zn(2+) site is built by E174, D196, and H378.

It belongs to the peptidase M20B family. Requires Zn(2+) as cofactor.

The protein resides in the cytoplasm. It catalyses the reaction Release of the N-terminal residue from a tripeptide.. Its function is as follows. Cleaves the N-terminal amino acid of tripeptides. This chain is Peptidase T, found in Clostridium perfringens (strain 13 / Type A).